The chain runs to 148 residues: FAD synthase (148 aa).

ATP contacts are provided by residues 14-15 (TF), 19-22 (HPGH), and Asp-97.

It belongs to the archaeal FAD synthase family. Homodimer. It depends on a divalent metal cation as a cofactor.

The catalysed reaction is FMN + ATP + H(+) = FAD + diphosphate. It participates in cofactor biosynthesis; FAD biosynthesis; FAD from FMN: step 1/1. Functionally, catalyzes the transfer of the AMP portion of ATP to flavin mononucleotide (FMN) to produce flavin adenine dinucleotide (FAD) coenzyme. The sequence is that of FAD synthase from Natrialba magadii (strain ATCC 43099 / DSM 3394 / CCM 3739 / CIP 104546 / IAM 13178 / JCM 8861 / NBRC 102185 / NCIMB 2190 / MS3) (Natronobacterium magadii).